A 538-amino-acid polypeptide reads, in one-letter code: Syncytin-1 (538 aa).

Positions 1 to 20 (MALPYHIFLFTVLLPSFTLT) are cleaved as a signal peptide. At 21 to 443 (APPPCRCMTS…NIGPWGLFSQ (423 aa)) the chain is on the extracellular side. Residue asparagine 169 is glycosylated (N-linked (GlcNAc...) asparagine). The CXXC motif lies at 186 to 189 (CWMC). Disulfide bonds link cysteine 186–cysteine 189, cysteine 186–cysteine 405, and cysteine 397–cysteine 404. Residues asparagine 208, asparagine 214, asparagine 234, asparagine 242, asparagine 245, and asparagine 281 are each glycosylated (N-linked (GlcNAc...) asparagine). The segment at 320 to 340 (ILPFVMAAGVLGALGTGIGGI) is fusion peptide. Positions 380–396 (LQNRRALDLLTAERGGT) are immunosuppression. A CX6CC motif is present at residues 397-405 (CLFLGEECC). A glycan (N-linked (GlcNAc...) asparagine) is linked at asparagine 409. The helical transmembrane segment at 444–464 (WMPWILPFLGPLAAIILLLLF) threads the bilayer. The interval 465-484 (GPCIFNLLVNFVSSRIEAVK) is essential for the fusiogenic function. Over 465–538 (GPCIFNLLVN…LLRPNSAGSS (74 aa)) the chain is Cytoplasmic. Positions 501–538 (PLDWPASPRSDVNDIKGTPPEEISTAQPLLRPNSAGSS) are disordered.

Belongs to the gamma type-C retroviral envelope protein family. HERV class-I W env subfamily. The mature envelope protein (Env) consists of a trimer of SU-TM heterodimers attached probably by a labile interchain disulfide bond. Interacts with the C-type lectin CD209/DC-SIGN. In terms of processing, specific enzymatic cleavages in vivo yield mature proteins. Envelope glycoproteins are synthesized as an inactive precursor that is heavily N-glycosylated and processed likely by furin in the Golgi to yield the mature SU and TM proteins. The cleavage site between SU and TM requires the minimal sequence [KR]-X-[KR]-R. Post-translationally, the CXXC motif is highly conserved across a broad range of retroviral envelope proteins. It is thought to participate in the formation of a labile disulfide bond possibly with the CX6CC motif present in the transmembrane protein.

The protein resides in the cell membrane. It is found in the virion. This endogenous retroviral envelope protein has retained its original fusogenic properties and participates in trophoblast fusion and the formation of a syncytium during placenta morphogenesis. May recognize and induce fusion through binding of SLC1A4 and SLC1A5. Its function is as follows. Endogenous envelope proteins may have kept, lost or modified their original function during evolution. Retroviral envelope proteins mediate receptor recognition and membrane fusion during early infection. The surface protein (SU) mediates receptor recognition, while the transmembrane protein (TM) acts as a class I viral fusion protein. The protein may have at least 3 conformational states: pre-fusion native state, pre-hairpin intermediate state, and post-fusion hairpin state. During viral and target cell membrane fusion, the coiled coil regions (heptad repeats) assume a trimer-of-hairpins structure, positioning the fusion peptide in close proximity to the C-terminal region of the ectodomain. The formation of this structure appears to drive apposition and subsequent fusion of membranes. The sequence is that of Syncytin-1 (ERVW-1) from Pongo pygmaeus (Bornean orangutan).